A 479-amino-acid polypeptide reads, in one-letter code: Dihydrolipoyl dehydrogenase (479 aa).

Residues 41-50, lysine 59, alanine 124, and 153-155 each bind FAD; these read EKRGALGGTC and TGS. Cysteines 50 and 55 form a disulfide. Residues 190-197, glutamate 213, isoleucine 247, and glycine 284 each bind NAD(+); that span reads GGGVIGLE. FAD is bound by residues aspartate 325 and 332–335; that span reads MLAH. Histidine 458 (proton acceptor) is an active-site residue.

It belongs to the class-I pyridine nucleotide-disulfide oxidoreductase family. As to quaternary structure, homodimer. FAD is required as a cofactor.

It carries out the reaction N(6)-[(R)-dihydrolipoyl]-L-lysyl-[protein] + NAD(+) = N(6)-[(R)-lipoyl]-L-lysyl-[protein] + NADH + H(+). This is Dihydrolipoyl dehydrogenase from Trypanosoma brucei brucei.